The sequence spans 226 residues: Putative ankyrin repeat protein RF_0939 (226 aa).

ANK repeat units lie at residues 56 to 86, 91 to 120, 125 to 154, and 157 to 194; these read VSTT…NVNM, FKDT…AVNG, LLGP…AVDQ, and SGET…DTNA.

This chain is Putative ankyrin repeat protein RF_0939, found in Rickettsia felis (strain ATCC VR-1525 / URRWXCal2) (Rickettsia azadi).